We begin with the raw amino-acid sequence, 248 residues long: Ureidoacrylate amidohydrolase RutB (248 aa).

The active-site Proton acceptor is Asp41. The active site involves Lys150. Cys183 serves as the catalytic Nucleophile.

It belongs to the isochorismatase family. RutB subfamily.

It carries out the reaction (Z)-3-ureidoacrylate + H2O + H(+) = (Z)-3-aminoacrylate + NH4(+) + CO2. The catalysed reaction is (Z)-3-ureidoacrylate + H2O = (Z)-3-aminoacrylate + carbamate + H(+). It catalyses the reaction (Z)-2-methylureidoacrylate + H2O + H(+) = (Z)-2-methylaminoacrylate + NH4(+) + CO2. Hydrolyzes ureidoacrylate to form aminoacrylate and carbamate. The carbamate hydrolyzes spontaneously, thereby releasing one of the nitrogen atoms of the pyrimidine ring as ammonia and one of its carbon atoms as CO2. This chain is Ureidoacrylate amidohydrolase RutB, found in Methylorubrum extorquens (strain ATCC 14718 / DSM 1338 / JCM 2805 / NCIMB 9133 / AM1) (Methylobacterium extorquens).